Here is a 267-residue protein sequence, read N- to C-terminus: Small ribosomal subunit protein uS3 (267 aa).

In terms of domain architecture, KH type-2 spans 39-114; that stretch reads IRKYLETNLK…RVNINIVEIR (76 aa). Over residues 229–248 the composition is skewed to low complexity; that stretch reads ANNRGRGNNRGRGNSRQNGG. The interval 229–267 is disordered; it reads ANNRGRGNNRGRGNSRQNGGRSRRPRQGQASTQGRGGNN.

It belongs to the universal ribosomal protein uS3 family. Part of the 30S ribosomal subunit. Forms a tight complex with proteins S10 and S14.

Functionally, binds the lower part of the 30S subunit head. Binds mRNA in the 70S ribosome, positioning it for translation. This Oenococcus oeni (strain ATCC BAA-331 / PSU-1) protein is Small ribosomal subunit protein uS3.